We begin with the raw amino-acid sequence, 123 residues long: Large ribosomal subunit protein bL12 (123 aa).

It belongs to the bacterial ribosomal protein bL12 family. In terms of assembly, homodimer. Part of the ribosomal stalk of the 50S ribosomal subunit. Forms a multimeric L10(L12)X complex, where L10 forms an elongated spine to which 2 to 4 L12 dimers bind in a sequential fashion. Binds GTP-bound translation factors.

Its function is as follows. Forms part of the ribosomal stalk which helps the ribosome interact with GTP-bound translation factors. Is thus essential for accurate translation. This chain is Large ribosomal subunit protein bL12, found in Chlorobium phaeovibrioides (strain DSM 265 / 1930) (Prosthecochloris vibrioformis (strain DSM 265)).